A 122-amino-acid polypeptide reads, in one-letter code: Large ribosomal subunit protein bL12 (122 aa).

Belongs to the bacterial ribosomal protein bL12 family. Homodimer. Part of the ribosomal stalk of the 50S ribosomal subunit. Forms a multimeric L10(L12)X complex, where L10 forms an elongated spine to which 2 to 4 L12 dimers bind in a sequential fashion. Binds GTP-bound translation factors.

Forms part of the ribosomal stalk which helps the ribosome interact with GTP-bound translation factors. Is thus essential for accurate translation. The chain is Large ribosomal subunit protein bL12 from Streptococcus pneumoniae serotype 19F (strain G54).